The sequence spans 845 residues: Proto-oncogene vav (845 aa).

Residues 1–119 form the Calponin-homology (CH) domain; the sequence is MELWRQCTHW…YTLSALSWTP (119 aa). The region spanning 194–373 is the DH domain; sequence KRCCCLREIQ…RDLAQCVNEV (180 aa). The region spanning 402 to 504 is the PH domain; sequence RPKIDGELKI…WMEQFEMAIS (103 aa). The segment at 515–564 adopts a Phorbol-ester/DAG-type zinc-finger fold; sequence GHDFQMFSFEETTSCKACQMLLRGTFYQGYRCYRCRAPAHKECLGRVPPC. An SH3 1 domain is found at 592–660; sequence LGLPKMEVFQ…PCNRVHPYVH (69 aa). Residues 671–765 form the SH2 domain; that stretch reads WYAGPMERAG…SLDTTLQFPY (95 aa). Positions 782–842 constitute an SH3 2 domain; the sequence is KYFGTAKARY…PSNYVEEDYS (61 aa). Residues tyrosine 826 and tyrosine 844 each carry the phosphotyrosine modification.

Interacts with SHB. Interacts with APS, DOCK2, GRB2, GRB3, DOCK2, SLA, TEC and ZNF655/VIK. Interacts with SIAH2; without leading to its degradation. Associates with BLNK, PLCG1, GRB2 and NCK1 in a B-cell antigen receptor-dependent fashion. Interacts with CBLB; which inhibits tyrosine phosphorylation and down-regulates activity. May interact with CCPG1. Interacts with CLNK. Interacts with THEMIS2. Interacts with NEK3 and this interaction is prolactin-dependent. Interacts with ITK. Interacts with PTK2B/PYK2. Interacts with HCK. Interacts with PTK2B/PYK2. Interacts (via SH2 domain) with SYK. Interacts with ANKRD54. Interacts with CD6. Interacts with isoform 2 of CRACR2A. Interacts with LCP2; this interaction plays a role in TCR-mediated cytokine production. Post-translationally, phosphorylated by FYN. Phosphorylated on tyrosine residues by HCK in response to IFNG and bacterial lipopolysaccharide (LPS). As to expression, widely expressed in hematopoietic cells but not in other cell types. Found in the spleen and lung.

Couples tyrosine kinase signals with the activation of the Rho/Rac GTPases, thus leading to cell differentiation and/or proliferation. This is Proto-oncogene vav (Vav1) from Mus musculus (Mouse).